Consider the following 454-residue polypeptide: Signal recognition particle protein (454 aa).

Residues 102–109 (GLQGTGKT), 184–188 (DTAGR), and 242–245 (TKMD) each bind GTP.

Belongs to the GTP-binding SRP family. SRP54 subfamily. In terms of assembly, part of the signal recognition particle protein translocation system, which is composed of SRP and FtsY.

The protein resides in the cytoplasm. It carries out the reaction GTP + H2O = GDP + phosphate + H(+). Involved in targeting and insertion of nascent membrane proteins into the cytoplasmic membrane. Binds to the hydrophobic signal sequence of the ribosome-nascent chain (RNC) as it emerges from the ribosomes. The SRP-RNC complex is then targeted to the cytoplasmic membrane where it interacts with the SRP receptor FtsY. In Aquifex aeolicus (strain VF5), this protein is Signal recognition particle protein.